The chain runs to 411 residues: 1-deoxy-D-xylulose 5-phosphate reductoisomerase (411 aa).

5 residues coordinate NADPH: T12, G13, S14, I15, and N127. K128 lines the 1-deoxy-D-xylulose 5-phosphate pocket. E129 provides a ligand contact to NADPH. D153 is a binding site for Mn(2+). 1-deoxy-D-xylulose 5-phosphate contacts are provided by S154, E155, S189, and H212. Residue E155 coordinates Mn(2+). G218 contacts NADPH. The 1-deoxy-D-xylulose 5-phosphate site is built by S225, N230, K231, and E234. E234 serves as a coordination point for Mn(2+).

This sequence belongs to the DXR family. Mg(2+) is required as a cofactor. The cofactor is Mn(2+).

It catalyses the reaction 2-C-methyl-D-erythritol 4-phosphate + NADP(+) = 1-deoxy-D-xylulose 5-phosphate + NADPH + H(+). Its pathway is isoprenoid biosynthesis; isopentenyl diphosphate biosynthesis via DXP pathway; isopentenyl diphosphate from 1-deoxy-D-xylulose 5-phosphate: step 1/6. Its function is as follows. Catalyzes the NADPH-dependent rearrangement and reduction of 1-deoxy-D-xylulose-5-phosphate (DXP) to 2-C-methyl-D-erythritol 4-phosphate (MEP). The chain is 1-deoxy-D-xylulose 5-phosphate reductoisomerase from Colwellia psychrerythraea (strain 34H / ATCC BAA-681) (Vibrio psychroerythus).